The sequence spans 132 residues: Glycerol-3-phosphate cytidylyltransferase (132 aa).

CTP is bound by residues 9–10 and 14–17; these read TY and HYGH. K44 lines the substrate pocket. A CTP-binding site is contributed by K46. A substrate-binding site is contributed by K77. 113-120 serves as a coordination point for CTP; that stretch reads RTEGISTT.

It belongs to the cytidylyltransferase family. Homotetramer or homodimer.

Its subcellular location is the cytoplasm. It catalyses the reaction sn-glycerol 3-phosphate + CTP + H(+) = CDP-glycerol + diphosphate. It functions in the pathway cell wall biogenesis; poly(ribitol phosphate) teichoic acid biosynthesis. Its function is as follows. Catalyzes the transfer of the cytidylyl group of CTP to sn-glycerol 3-phosphate so the activated glycerol 3-phosphate can be used for teichoic acid synthesis, via incorporation into both the linkage unit by TarB and TarF. The polypeptide is Glycerol-3-phosphate cytidylyltransferase (Staphylococcus aureus (strain NCTC 8325 / PS 47)).